We begin with the raw amino-acid sequence, 1663 residues long: Cortactin-binding protein 2 (1663 aa).

5 disordered regions span residues 1–23 (MATD…AGAA), 203–222 (KKKT…RSTE), 367–440 (GASV…LHPG), 454–478 (GNAN…SPTS), and 498–614 (RFTS…LPPK). A coiled-coil region spans residues 119 to 276 (KKMQERMSAQ…EQLKKGSDSK (158 aa)). The segment covering 386–396 (PSTGSTSDPTS) has biased composition (low complexity). At R498 the chain carries Asymmetric dimethylarginine. Polar residues predominate over residues 583 to 593 (TVASTPSSLPQ). ANK repeat units follow at residues 709-739 (GRPT…DINY), 743-772 (DGHS…QVNA), 776-805 (NGFT…NINH), 809-838 (GGQT…NRSV), 842-871 (DGWT…PAHG), and 912-942 (EGWT…EPER). The segment at 1448-1483 (KKGESGAWRKVNTSPRRKSGRFSLPTWNKPDLSTEG) is disordered. Residue S1524 is modified to Phosphoserine. The segment at 1560 to 1663 (DSSGNNPVLS…KNGHLEKPNK (104 aa)) is disordered. 2 stretches are compositionally biased toward polar residues: residues 1561-1574 (SSGN…TINN) and 1582-1599 (KEVS…SNSK). The span at 1624–1638 (SQNTKRSSSSSNTRQ) shows a compositional bias: low complexity. The span at 1645 to 1663 (SKEENWNLHKNGHLEKPNK) shows a compositional bias: basic and acidic residues.

In terms of assembly, interacts with CTTN/cortactin SH3 domain. Interacts with STRN, STRN4/zinedin and MOB4/phocein; this interactions mediate the association with the STRIPAK core complex and may regulate dendritic spine distribution of the STRIPAK complex in hippocampal neurons. Activation of glutamate receptors weakens the interaction with STRN and STRN4.

Its subcellular location is the cytoplasm. The protein localises to the cell cortex. It is found in the cell projection. It localises to the dendritic spine. Its function is as follows. Regulates the dendritic spine distribution of CTTN/cortactin in hippocampal neurons, and thus controls dendritic spinogenesis and dendritic spine maintenance. Associates with the striatin-interacting phosphatase and kinase (STRIPAK) core complex to regulate dendritic spine distribution of the STRIPAK complex in hippocampal neurons. This Gorilla gorilla gorilla (Western lowland gorilla) protein is Cortactin-binding protein 2 (CTTNBP2).